A 102-amino-acid chain; its full sequence is ATP-dependent Clp protease adapter protein ClpS (102 aa).

It belongs to the ClpS family. Binds to the N-terminal domain of the chaperone ClpA.

In terms of biological role, involved in the modulation of the specificity of the ClpAP-mediated ATP-dependent protein degradation. This chain is ATP-dependent Clp protease adapter protein ClpS, found in Shewanella sediminis (strain HAW-EB3).